The following is a 78-amino-acid chain: Chassatide C4 (78 aa).

An N-terminal signal peptide occupies residues 1 to 23 (MAKFATQLFLLTASVVMLEVQSS). The propeptide at 24–42 (IVIMQDPDLGRKLIMNPAN) is removed in mature form. The segment at residues 43–71 (GASCGETCFTGICFTAGCSCNPWPTCTRN) is a cross-link (cyclopeptide (Gly-Asn)). Cystine bridges form between cysteine 46–cysteine 60, cysteine 50–cysteine 62, and cysteine 55–cysteine 68. A propeptide spans 72–78 (GLNPESI) (removed in mature form).

This is a cyclic peptide.

In terms of biological role, probably participates in a plant defense mechanism. In Chassalia chartacea (Chassalia curviflora), this protein is Chassatide C4.